Reading from the N-terminus, the 476-residue chain is Riboflavin transporter rft-2 (476 aa).

Residues methionine 1 to glycine 21 form a helical membrane-spanning segment. Over threonine 22–asparagine 41 the chain is Cytoplasmic. The chain crosses the membrane as a helical span at residues leucine 42–isoleucine 62. At leucine 63–alanine 75 the chain is on the extracellular side. A helical membrane pass occupies residues proline 76–tryptophan 96. Residues serine 97–serine 113 lie on the Cytoplasmic side of the membrane. Residues leucine 114–alanine 134 traverse the membrane as a helical segment. Residues glutamine 135–tyrosine 140 are Extracellular-facing. A helical membrane pass occupies residues leucine 141 to alanine 161. The Cytoplasmic portion of the chain corresponds to glutamine 162–serine 185. A helical transmembrane segment spans residues isoleucine 186–tyrosine 206. The Extracellular segment spans residues arginine 207–lysine 306. The disordered stretch occupies residues alanine 215 to isoleucine 249. Residues asparagine 218 to leucine 232 show a composition bias toward basic and acidic residues. Asparagine 233 carries N-linked (GlcNAc...) asparagine glycosylation. Residues phenylalanine 307–serine 327 form a helical membrane-spanning segment. Over valine 328 to histidine 342 the chain is Cytoplasmic. Residues phenylalanine 343 to serine 363 traverse the membrane as a helical segment. Over valine 364–serine 366 the chain is Extracellular. The helical transmembrane segment at isoleucine 367–leucine 387 threads the bilayer. At alanine 388–asparagine 393 the chain is on the cytoplasmic side. A helical membrane pass occupies residues leucine 394–alanine 414. Residues glycine 415 to arginine 437 lie on the Extracellular side of the membrane. Residues leucine 438–proline 458 traverse the membrane as a helical segment. The Cytoplasmic portion of the chain corresponds to leucine 459–serine 476.

The protein belongs to the riboflavin transporter family. Expressed in intestine and pharynx.

The protein resides in the cell membrane. The enzyme catalyses riboflavin(in) = riboflavin(out). Riboflavin transporter. This chain is Riboflavin transporter rft-2, found in Caenorhabditis elegans.